The following is a 128-amino-acid chain: Large ribosomal subunit protein uL22 (128 aa).

This sequence belongs to the universal ribosomal protein uL22 family. In terms of assembly, part of the 50S ribosomal subunit.

Functionally, this protein binds specifically to 23S rRNA; its binding is stimulated by other ribosomal proteins, e.g. L4, L17, and L20. It is important during the early stages of 50S assembly. It makes multiple contacts with different domains of the 23S rRNA in the assembled 50S subunit and ribosome. The globular domain of the protein is located near the polypeptide exit tunnel on the outside of the subunit, while an extended beta-hairpin is found that lines the wall of the exit tunnel in the center of the 70S ribosome. This is Large ribosomal subunit protein uL22 from Methylobacterium radiotolerans (strain ATCC 27329 / DSM 1819 / JCM 2831 / NBRC 15690 / NCIMB 10815 / 0-1).